Reading from the N-terminus, the 268-residue chain is Tryptophan synthase alpha chain (268 aa).

Active-site proton acceptor residues include E49 and D60.

Belongs to the TrpA family. In terms of assembly, tetramer of two alpha and two beta chains.

It catalyses the reaction (1S,2R)-1-C-(indol-3-yl)glycerol 3-phosphate + L-serine = D-glyceraldehyde 3-phosphate + L-tryptophan + H2O. Its pathway is amino-acid biosynthesis; L-tryptophan biosynthesis; L-tryptophan from chorismate: step 5/5. In terms of biological role, the alpha subunit is responsible for the aldol cleavage of indoleglycerol phosphate to indole and glyceraldehyde 3-phosphate. This Escherichia coli (strain ATCC 8739 / DSM 1576 / NBRC 3972 / NCIMB 8545 / WDCM 00012 / Crooks) protein is Tryptophan synthase alpha chain.